We begin with the raw amino-acid sequence, 362 residues long: Chorismate synthase (362 aa).

Residues arginine 48 and arginine 54 each contribute to the NADP(+) site. FMN-binding positions include 131 to 133 (RSS), 243 to 244 (NA), glycine 287, 302 to 306 (KPTSS), and arginine 328.

This sequence belongs to the chorismate synthase family. Homotetramer. FMNH2 is required as a cofactor.

The catalysed reaction is 5-O-(1-carboxyvinyl)-3-phosphoshikimate = chorismate + phosphate. It participates in metabolic intermediate biosynthesis; chorismate biosynthesis; chorismate from D-erythrose 4-phosphate and phosphoenolpyruvate: step 7/7. Catalyzes the anti-1,4-elimination of the C-3 phosphate and the C-6 proR hydrogen from 5-enolpyruvylshikimate-3-phosphate (EPSP) to yield chorismate, which is the branch point compound that serves as the starting substrate for the three terminal pathways of aromatic amino acid biosynthesis. This reaction introduces a second double bond into the aromatic ring system. The protein is Chorismate synthase of Rhodopseudomonas palustris (strain ATCC BAA-98 / CGA009).